A 121-amino-acid chain; its full sequence is Large ribosomal subunit protein uL14c (121 aa).

The protein belongs to the universal ribosomal protein uL14 family. Part of the 50S ribosomal subunit.

The protein resides in the plastid. It localises to the chloroplast. Binds to 23S rRNA. The polypeptide is Large ribosomal subunit protein uL14c (Thalassiosira pseudonana (Marine diatom)).